Here is a 146-residue protein sequence, read N- to C-terminus: Large ribosomal subunit protein uL15 (146 aa).

A disordered region spans residues 1-51 (MKLHELQPAAGSRKVRNRVGRGTSSGNGKTSGRGQKGQKARSGGGVRLGFE). 2 stretches are compositionally biased toward gly residues: residues 23–35 (TSSGNGKTSGRGQ) and 42–51 (SGGGVRLGFE).

The protein belongs to the universal ribosomal protein uL15 family. In terms of assembly, part of the 50S ribosomal subunit.

Binds to the 23S rRNA. This chain is Large ribosomal subunit protein uL15, found in Streptococcus sanguinis (strain SK36).